Reading from the N-terminus, the 158-residue chain is 2-C-methyl-D-erythritol 2,4-cyclodiphosphate synthase (158 aa).

Asp-8 and His-10 together coordinate a divalent metal cation. 4-CDP-2-C-methyl-D-erythritol 2-phosphate-binding positions include 8-10 (DVH) and 34-35 (HS). His-42 is a binding site for a divalent metal cation. 4-CDP-2-C-methyl-D-erythritol 2-phosphate contacts are provided by residues 56 to 58 (DIG), 61 to 65 (FPDDD), 132 to 135 (TTFE), and Phe-139.

It belongs to the IspF family. As to quaternary structure, homotrimer. A divalent metal cation is required as a cofactor.

The enzyme catalyses 4-CDP-2-C-methyl-D-erythritol 2-phosphate = 2-C-methyl-D-erythritol 2,4-cyclic diphosphate + CMP. It functions in the pathway isoprenoid biosynthesis; isopentenyl diphosphate biosynthesis via DXP pathway; isopentenyl diphosphate from 1-deoxy-D-xylulose 5-phosphate: step 4/6. Involved in the biosynthesis of isopentenyl diphosphate (IPP) and dimethylallyl diphosphate (DMAPP), two major building blocks of isoprenoid compounds. Catalyzes the conversion of 4-diphosphocytidyl-2-C-methyl-D-erythritol 2-phosphate (CDP-ME2P) to 2-C-methyl-D-erythritol 2,4-cyclodiphosphate (ME-CPP) with a corresponding release of cytidine 5-monophosphate (CMP). The chain is 2-C-methyl-D-erythritol 2,4-cyclodiphosphate synthase from Natranaerobius thermophilus (strain ATCC BAA-1301 / DSM 18059 / JW/NM-WN-LF).